Here is a 196-residue protein sequence, read N- to C-terminus: SAGA-associated factor 11 homolog (196 aa).

Residues 102–123 (CTCPNCDRLVAAARFAPHLEKC) form an SGF11-type zinc finger. The interval 140-196 (TKEGTSASSNSSYVHSGANAGGTDDEDDVDWSSDKRKKKSTQNSRNNGSKKNNGKTF) is disordered. Residues 142 to 153 (EGTSASSNSSYV) show a composition bias toward polar residues. A Phosphoserine modification is found at S172. Low complexity predominate over residues 182–196 (NSRNNGSKKNNGKTF).

This sequence belongs to the SGF11 family. As to quaternary structure, component of some SAGA transcription coactivator-HAT complexes, at least composed of Ada2b, not/nonstop, Pcaf/Gcn5, Sgf11 and Spt3. Within the SAGA complex, Sgf11, e(y)2, and not/nonstop form an additional subcomplex of SAGA called the DUB module (deubiquitination module). Interacts directly with not/nonstop. Interacts with the AMEX complex component xmas-2. Interacts with Cbp80; important for promoter recruitment of Sgf11 that is not associated with the DUB module.

Its subcellular location is the nucleus. The protein localises to the nucleoplasm. It is found in the cytoplasm. Functionally, component of the transcription regulatory histone acetylation (HAT) complex SAGA, a multiprotein complex that activates transcription by remodeling chromatin and mediating histone acetylation and deubiquitination. Within the SAGA complex, participates in a subcomplex that specifically deubiquitinates histone H2B. The SAGA complex is recruited to specific gene promoters by activators, where it is required for transcription. Required for nuclear receptor-mediated transactivation. Binds independently on SAGA to promoters in an RNA-dependent manner. Binds to mRNA and is essential for total mRNA export from the nucleus. Required to counteract heterochromatin silencing. Controls the development of neuronal connectivity in visual system by being required for accurate axon targeting in the optic lobe. Required for expression of ecdysone-induced genes such as br/broad. This Drosophila persimilis (Fruit fly) protein is SAGA-associated factor 11 homolog.